The chain runs to 311 residues: Porphobilinogen deaminase (311 aa).

C241 carries the post-translational modification S-(dipyrrolylmethanemethyl)cysteine.

The protein belongs to the HMBS family. As to quaternary structure, monomer. Dipyrromethane serves as cofactor.

It carries out the reaction 4 porphobilinogen + H2O = hydroxymethylbilane + 4 NH4(+). It participates in porphyrin-containing compound metabolism; protoporphyrin-IX biosynthesis; coproporphyrinogen-III from 5-aminolevulinate: step 2/4. Functionally, tetrapolymerization of the monopyrrole PBG into the hydroxymethylbilane pre-uroporphyrinogen in several discrete steps. This Geobacillus sp. (strain WCH70) protein is Porphobilinogen deaminase.